The chain runs to 653 residues: tRNA-guanine(15) transglycosylase (653 aa).

The active-site Nucleophile is the Asp91. Residues Asp126 and Ala193 each coordinate substrate. Residues Cys276, Cys278, and Cys281 each contribute to the Zn(2+) site. One can recognise a PUA domain in the interval 578–653; sequence AWRVAVNEES…QAVKTRKGGF (76 aa).

This sequence belongs to the archaeosine tRNA-ribosyltransferase family. Zn(2+) serves as cofactor.

It carries out the reaction guanosine(15) in tRNA + 7-cyano-7-deazaguanine = 7-cyano-7-carbaguanosine(15) in tRNA + guanine. It participates in tRNA modification; archaeosine-tRNA biosynthesis. Its function is as follows. Exchanges the guanine residue with 7-cyano-7-deazaguanine (preQ0) at position 15 in the dihydrouridine loop (D-loop) of archaeal tRNAs. In Methanothermobacter thermautotrophicus (strain ATCC 29096 / DSM 1053 / JCM 10044 / NBRC 100330 / Delta H) (Methanobacterium thermoautotrophicum), this protein is tRNA-guanine(15) transglycosylase.